A 152-amino-acid polypeptide reads, in one-letter code: Transcriptional repressor NrdR (152 aa).

A zinc finger lies at 3 to 34 (CPFCGHADTQVVDSRVSEDGASIRRRRRCLEC). The 91-residue stretch at 49-139 (PQVVKQDGHR…VYRSFQDVAE (91 aa)) folds into the ATP-cone domain.

The protein belongs to the NrdR family. Requires Zn(2+) as cofactor.

Functionally, negatively regulates transcription of bacterial ribonucleotide reductase nrd genes and operons by binding to NrdR-boxes. The sequence is that of Transcriptional repressor NrdR from Laribacter hongkongensis (strain HLHK9).